Reading from the N-terminus, the 338-residue chain is MRVLVTGGSGYIGSHTCVQLLQNGHDVVILDNLCNSKRSVLPVIERLGGKHPTFVEGDIRNEALITEILHDHAIDTVIHFAGLKAVGESVAKPLEYYDNNVNGTLRLVSAMRAANVKNLIFSSSATVYGDQPKIPYVESFPTGTPQSPYGKSKLMVEQILTDLQKAQPEWSIALLRYFNPVGAHPSGDMGEDPQGIPNNLMPYIAQVAVGRRESLAVFGNDYPTEDGTGVRDYIHVMDLADGHVVAMEKLADKSGVHIYNLGAGVGSSVLDVVNAFSKACGKPINYHFAPRRDGDLPAYWADASKADRELNWRVTRTLDEMAQDTWHWQSRHPQGYSD.

NAD(+)-binding positions include Tyr-11–Ile-12, Asp-31–Ser-36, Asp-58–Ile-59, Phe-80–Lys-84, Asn-99, Ser-124, Tyr-149, Lys-153, and Phe-178. Residues Ser-124 and Tyr-149 each coordinate substrate. Tyr-149 functions as the Proton acceptor in the catalytic mechanism. Substrate contacts are provided by residues Asn-179, Asn-199–Leu-200, Ala-216–Phe-218, Arg-231, Arg-292–Asp-295, and Tyr-299.

It belongs to the NAD(P)-dependent epimerase/dehydratase family. In terms of assembly, homodimer. Requires NAD(+) as cofactor.

The enzyme catalyses UDP-alpha-D-glucose = UDP-alpha-D-galactose. Its pathway is carbohydrate metabolism; galactose metabolism. Functionally, involved in the metabolism of galactose. Catalyzes the conversion of UDP-galactose (UDP-Gal) to UDP-glucose (UDP-Glc) through a mechanism involving the transient reduction of NAD. The polypeptide is UDP-glucose 4-epimerase (galE) (Salmonella typhi).